We begin with the raw amino-acid sequence, 479 residues long: Trigger factor (479 aa).

The 88-residue stretch at 174 to 261 folds into the PPIase FKBP-type domain; that stretch reads GDIAVVSFSG…LKELKTRELP (88 aa). Residues 438-479 form a disordered region; it reads VLESEAKTSKPAAKSKGSKTKSTKTKTNKANTEKPASDKSKS. A compositionally biased stretch (basic residues) spans 453–464; that stretch reads KGSKTKSTKTKT. Positions 468-479 are enriched in basic and acidic residues; it reads NTEKPASDKSKS.

It belongs to the FKBP-type PPIase family. Tig subfamily.

The protein localises to the cytoplasm. The catalysed reaction is [protein]-peptidylproline (omega=180) = [protein]-peptidylproline (omega=0). Its function is as follows. Involved in protein export. Acts as a chaperone by maintaining the newly synthesized protein in an open conformation. Functions as a peptidyl-prolyl cis-trans isomerase. The polypeptide is Trigger factor (Prochlorococcus marinus (strain MIT 9313)).